Reading from the N-terminus, the 579-residue chain is Probable pectinesterase/pectinesterase inhibitor 7 (579 aa).

The signal sequence occupies residues 1–20 (MESPIFILITLSFFLQSVLA). The pectinesterase inhibitor 7 stretch occupies residues 22–185 (SQTLSNSSTI…TKLLGVSLAL (164 aa)). Asparagine 27, asparagine 115, asparagine 174, asparagine 274, asparagine 277, asparagine 287, asparagine 326, and asparagine 333 each carry an N-linked (GlcNAc...) asparagine glycan. The tract at residues 265-564 (VTVSQDGTGN…TVTGLFIEAD (300 aa)) is pectinesterase 7. Threonine 342 provides a ligand contact to substrate. Asparagine 359 carries an N-linked (GlcNAc...) asparagine glycan. Glutamine 372 lines the substrate pocket. Aspartate 395 serves as the catalytic Proton donor; for pectinesterase activity. Cysteine 409 and cysteine 429 are disulfide-bonded. Aspartate 416 functions as the Nucleophile; for pectinesterase activity in the catalytic mechanism. Asparagine 462 and asparagine 475 each carry an N-linked (GlcNAc...) asparagine glycan. Substrate contacts are provided by arginine 484 and tryptophan 486. Asparagine 526, asparagine 533, asparagine 547, and asparagine 553 each carry an N-linked (GlcNAc...) asparagine glycan.

This sequence in the N-terminal section; belongs to the PMEI family. It in the C-terminal section; belongs to the pectinesterase family. In terms of tissue distribution, expressed in siliques.

The protein localises to the secreted. It localises to the cell wall. The catalysed reaction is [(1-&gt;4)-alpha-D-galacturonosyl methyl ester](n) + n H2O = [(1-&gt;4)-alpha-D-galacturonosyl](n) + n methanol + n H(+). Its pathway is glycan metabolism; pectin degradation; 2-dehydro-3-deoxy-D-gluconate from pectin: step 1/5. In terms of biological role, acts in the modification of cell walls via demethylesterification of cell wall pectin. The protein is Probable pectinesterase/pectinesterase inhibitor 7 (PME7) of Arabidopsis thaliana (Mouse-ear cress).